The primary structure comprises 294 residues: Secreted frizzled-related protein 2 (294 aa).

Positions 1 to 24 are cleaved as a signal peptide; that stretch reads MPRGPGSLLLLVLASHCCLGSARG. The FZ domain maps to 34–154; the sequence is YKRSNCKPIP…PQDNDLCIPL (121 aa). Intrachain disulfides connect C39/C102, C49/C95, C86/C124, C113/C151, C117/C141, C171/C244, C174/C246, and C189/C294. One can recognise an NTR domain in the interval 171 to 294; sequence CEACKNKNED…ISRSIRKLQC (124 aa).

This sequence belongs to the secreted frizzled-related protein (sFRP) family.

It is found in the secreted. In terms of biological role, soluble frizzled-related proteins (sFRPS) function as modulators of Wnt signaling through direct interaction with Wnts. They have a role in regulating cell growth and differentiation in specific cell types. SFRP2 may be important for eye retinal development and for myogenesis. The sequence is that of Secreted frizzled-related protein 2 (SFRP2) from Canis lupus familiaris (Dog).